The sequence spans 352 residues: Mitochondrial adenine nucleotide transporter ADNT1 (352 aa).

3 Solcar repeats span residues 36-123 (KSIC…ASNG), 139-227 (LTPL…LKDW), and 242-343 (LTVV…VKDV). Helical transmembrane passes span 41-61 (SLFAGGVAGGVSRTAVAPLER), 100-120 (GTNCARIVPNSAVKFFSYEQA), 145-162 (LGAGATAGIIAMSATYPM), 202-221 (GWLPSVIGVVPYVGLNFSVY), 242-263 (LTVVTRLTCGAIAGTVGQTIAY), and 324-340 (VKVVPSIAIAFVTYEMV).

This sequence belongs to the mitochondrial carrier (TC 2.A.29) family. In terms of tissue distribution, expressed in seedling radicles and roots, vasculature of cotyledons, leaf primordia, leaves and sepals.

It is found in the mitochondrion inner membrane. With respect to regulation, inhibited by pyridoxal 5-phosphate, bathophenanthroline, mersalyl, p-hydroxymercuribenzoate and tannic acid. In terms of biological role, mitochondrial adenylate carrier that catalyzes specifically the transport of ATP, ADP and AMP by a counter-exchange mechanism across the inner mitochondrial membrane. Substrate preference in reconstituted proteoliposomes is ATP &gt; AMP &gt; ADP. May play a role in oxidative phosphorylation and be important for the provision of energy required to support growth in heterotrophic tissues. The polypeptide is Mitochondrial adenine nucleotide transporter ADNT1 (ADNT1) (Arabidopsis thaliana (Mouse-ear cress)).